A 51-amino-acid chain; its full sequence is Lysis protein for colicin A (51 aa).

Positions 1 to 18 are cleaved as a signal peptide; the sequence is MKKIIICVILLAIMLLAA. Cys19 carries the N-palmitoyl cysteine lipid modification. Residue Cys19 is the site of S-diacylglycerol cysteine attachment. A disordered region spans residues 27–51; that stretch reads TGGGSVSPSSIVTGVSMGSDGVGNP.

The protein localises to the cell outer membrane. Its function is as follows. Lysis proteins are required for both colicin release and partial cell lysis. The sequence is that of Lysis protein for colicin A (cal) from Citrobacter freundii.